The sequence spans 252 residues: 3-dehydroquinate dehydratase (252 aa).

Residues serine 21, 46 to 48, and arginine 82 each bind 3-dehydroquinate; that span reads EWR. Histidine 143 serves as the catalytic Proton donor/acceptor. Lysine 170 functions as the Schiff-base intermediate with substrate in the catalytic mechanism. The 3-dehydroquinate site is built by arginine 213, serine 232, and glutamine 236.

The protein belongs to the type-I 3-dehydroquinase family. In terms of assembly, homodimer.

The catalysed reaction is 3-dehydroquinate = 3-dehydroshikimate + H2O. The protein operates within metabolic intermediate biosynthesis; chorismate biosynthesis; chorismate from D-erythrose 4-phosphate and phosphoenolpyruvate: step 3/7. In terms of biological role, involved in the third step of the chorismate pathway, which leads to the biosynthesis of aromatic amino acids. Catalyzes the cis-dehydration of 3-dehydroquinate (DHQ) and introduces the first double bond of the aromatic ring to yield 3-dehydroshikimate. The protein is 3-dehydroquinate dehydratase of Shigella dysenteriae.